The primary structure comprises 494 residues: MNREAILWKNINSIPEEPDLIKSLEVLSMEQNDRERELEHNLILNKQISEQIPEWIIPDSLSELSSGIDLNFVLEEQEVNDNNSQPSLEEEVVSESDVESMRSFNVAMNRGEVGESSNKRPKREPDLFTSFGKIREDIGDKNPSLNILNLDCVNSPSDRKNKIDKWAAELGLVFLTNPEAYTTAPNAARARLAYMEHKSLGIVNRFIKSTQWTQMNGDILLNVVSGLYTMFLGEDYTGNQEKTLEQERAKASLRLINLQLCDICSLQSFFCDYESNLYKLPQNEYPSLVKQYLAKIPIVGEKASKRFEEEASAATSYSLGFAHKLVNEELAKICELSKKQKKLKRFNKNCCSTFEKPYEYGCKPSYSKKKKYSKKYKPKYTKYKVIRKKKKFSPGKYFKPKDKKSEKAKYCPKGKKTCRCWVCNIEGHYANECPNRQTSEKFKLIQIAENYGLEPIENPYEDQQEICLLEQIQLSSSDSELDDTCEESSSEESE.

A Nuclear localization signal motif is present at residues 120–123 (RPKR). The segment at 418–435 (CRCWVCNIEGHYANECPN) adopts a CCHC-type zinc-finger fold. A disordered region spans residues 474 to 494 (LSSSDSELDDTCEESSSEESE). The segment covering 479-494 (SELDDTCEESSSEESE) has biased composition (acidic residues).

Belongs to the caulimoviridae capsid protein family. As to quaternary structure, interacts (via nuclear localization signal) with host importin alpha.

The protein localises to the virion. It localises to the host nucleus. In terms of biological role, self assembles to form an icosahedral capsid, about 50 nm in diameter, nm, composed of 420 subunits of the viral capsid protein. The capsid encapsulates the genomic dsDNA. Following virus entry into host cell, provides nuclear import of the viral genome. Virus particles do not enter the nucleus, but dock at the nuclear membrane through the interaction with host importins. This is Probable capsid protein from Dianthus caryophyllus (Carnation).